A 148-amino-acid chain; its full sequence is uncharacterized protein (148 aa).

2 CBS domains span residues 8-68 and 74-130; these read MTAD…PNSQ and MTEK…ERAG. A disordered region spans residues 127–148; that stretch reads ERAGSALSDISEGDNREEGFFH. Residues 139–148 are compositionally biased toward basic and acidic residues; it reads GDNREEGFFH.

This is an uncharacterized protein from Bacillus subtilis (strain 168).